The sequence spans 162 residues: Nucleotide-binding protein ACIAD3137 (162 aa).

Belongs to the YajQ family.

Its function is as follows. Nucleotide-binding protein. The chain is Nucleotide-binding protein ACIAD3137 from Acinetobacter baylyi (strain ATCC 33305 / BD413 / ADP1).